A 232-amino-acid polypeptide reads, in one-letter code: Ubiquinone biosynthesis O-methyltransferase (232 aa).

The S-adenosyl-L-methionine site is built by R36, G55, D76, and M120.

The protein belongs to the methyltransferase superfamily. UbiG/COQ3 family.

It catalyses the reaction a 3-demethylubiquinol + S-adenosyl-L-methionine = a ubiquinol + S-adenosyl-L-homocysteine + H(+). It carries out the reaction a 3-(all-trans-polyprenyl)benzene-1,2-diol + S-adenosyl-L-methionine = a 2-methoxy-6-(all-trans-polyprenyl)phenol + S-adenosyl-L-homocysteine + H(+). It functions in the pathway cofactor biosynthesis; ubiquinone biosynthesis. Functionally, O-methyltransferase that catalyzes the 2 O-methylation steps in the ubiquinone biosynthetic pathway. The protein is Ubiquinone biosynthesis O-methyltransferase of Burkholderia orbicola (strain MC0-3).